Consider the following 140-residue polypeptide: FAD synthase (140 aa).

ATP contacts are provided by residues 10–11, 15–18, and asparagine 93; these read TF and HPGH.

The protein belongs to the archaeal FAD synthase family. As to quaternary structure, homodimer. A divalent metal cation is required as a cofactor.

It carries out the reaction FMN + ATP + H(+) = FAD + diphosphate. The protein operates within cofactor biosynthesis; FAD biosynthesis; FAD from FMN: step 1/1. Functionally, catalyzes the transfer of the AMP portion of ATP to flavin mononucleotide (FMN) to produce flavin adenine dinucleotide (FAD) coenzyme. The protein is FAD synthase of Methanocella arvoryzae (strain DSM 22066 / NBRC 105507 / MRE50).